Here is a 156-residue protein sequence, read N- to C-terminus: Probable succinate transporter subunit YjjB (156 aa).

Transmembrane regions (helical) follow at residues 7-27 (WALL…AMVF), 54-74 (FGMD…MIGI), 86-106 (VFTV…TAMI), and 128-148 (FLKA…PGLW).

The protein belongs to the ThrE exporter (TC 2.A.79) family. The transporter is composed of YjjB and YjjP.

It localises to the cell inner membrane. Involved in succinate export with YjjP. Both proteins are required for export. This chain is Probable succinate transporter subunit YjjB, found in Yersinia enterocolitica serotype O:8 / biotype 1B (strain NCTC 13174 / 8081).